Reading from the N-terminus, the 207-residue chain is Tereporin-Ts1 (207 aa).

The signal sequence occupies residues 1–11 (VIFALVLGNAS). Residues 35 to 54 (SAGTSLASTILSGLAASGYR) are N-terminal region. Residues G111, S129, P131, Y164, and Y165 each coordinate phosphocholine.

The protein belongs to the actinoporin family. Conoidea subfamily. In terms of assembly, octamer or nonamer in membranes. Monomer in the soluble state. As to expression, expressed by the venom duct.

It is found in the secreted. The protein localises to the nematocyst. It localises to the target cell membrane. Functionally, pore-forming protein that forms pores of around 1 nm and causes cardiac stimulation and cytolysis. This chain is Tereporin-Ts1, found in Terebra subulata (Chocolate spotted auger).